Here is a 521-residue protein sequence, read N- to C-terminus: Probable cytochrome P450 12d1 proximal, mitochondrial (521 aa).

The N-terminal 19 residues, Met-1–Ser-19, are a transit peptide targeting the mitochondrion. Cys-467 is a heme binding site.

The protein belongs to the cytochrome P450 family. Heme serves as cofactor.

It localises to the mitochondrion membrane. In Drosophila melanogaster (Fruit fly), this protein is Probable cytochrome P450 12d1 proximal, mitochondrial (Cyp12d1-p).